Consider the following 114-residue polypeptide: Fluoride-specific ion channel FluC 1 (114 aa).

The next 3 helical transmembrane spans lie at 23–43 (ATLT…SYVF), 52–72 (LSTA…TLSV), and 84–104 (FLAM…SHLG). Positions 62 and 65 each coordinate Na(+).

It belongs to the fluoride channel Fluc/FEX (TC 1.A.43) family.

It localises to the cell membrane. It carries out the reaction fluoride(in) = fluoride(out). Na(+) is not transported, but it plays an essential structural role and its presence is essential for fluoride channel function. Fluoride-specific ion channel. Important for reducing fluoride concentration in the cell, thus reducing its toxicity. The sequence is that of Fluoride-specific ion channel FluC 1 from Desulfitobacterium hafniense (strain Y51).